A 298-amino-acid polypeptide reads, in one-letter code: Small ribosomal subunit protein uS2 (298 aa).

The disordered stretch occupies residues 232-298 (ETFEGDDIPS…TAEAEEPAAE (67 aa)). The span at 234 to 250 (FEGDDIPSAIDFEDETP) shows a compositional bias: acidic residues. The segment covering 251-276 (EPVAEVADAEVAAAEPVAEAAPTAEA) has biased composition (low complexity).

It belongs to the universal ribosomal protein uS2 family.

This is Small ribosomal subunit protein uS2 from Acaryochloris marina (strain MBIC 11017).